The following is an 803-amino-acid chain: Leucine--tRNA ligase (803 aa).

The short motif at 40–51 (PYPSGAGLHVGH) is the 'HIGH' region element. The 'KMSKS' region motif lies at 575 to 579 (KMSKS). Lys-578 lines the ATP pocket.

The protein belongs to the class-I aminoacyl-tRNA synthetase family.

It is found in the cytoplasm. It catalyses the reaction tRNA(Leu) + L-leucine + ATP = L-leucyl-tRNA(Leu) + AMP + diphosphate. The polypeptide is Leucine--tRNA ligase (Listeria welshimeri serovar 6b (strain ATCC 35897 / DSM 20650 / CCUG 15529 / CIP 8149 / NCTC 11857 / SLCC 5334 / V8)).